The primary structure comprises 140 residues: L-fucose mutarotase (140 aa).

The active-site Proton donor is the His22. Substrate contacts are provided by residues Asp30, Arg107, and 129–131 (YGN).

The protein belongs to the RbsD / FucU family. FucU mutarotase subfamily. In terms of assembly, homodecamer.

The protein localises to the cytoplasm. It carries out the reaction alpha-L-fucose = beta-L-fucose. It participates in carbohydrate metabolism; L-fucose metabolism. Involved in the anomeric conversion of L-fucose. This Shigella boydii serotype 18 (strain CDC 3083-94 / BS512) protein is L-fucose mutarotase.